The primary structure comprises 310 residues: UDP-N-acetylenolpyruvoylglucosamine reductase (310 aa).

Residues 34 to 211 (TGGPAQCVYV…REDMGKIAQE (178 aa)) form the FAD-binding PCMH-type domain. The active site involves Arg-177. Ser-225 acts as the Proton donor in catalysis. Glu-295 is a catalytic residue.

This sequence belongs to the MurB family. The cofactor is FAD.

It localises to the cytoplasm. The enzyme catalyses UDP-N-acetyl-alpha-D-muramate + NADP(+) = UDP-N-acetyl-3-O-(1-carboxyvinyl)-alpha-D-glucosamine + NADPH + H(+). Its pathway is cell wall biogenesis; peptidoglycan biosynthesis. Cell wall formation. In Beijerinckia indica subsp. indica (strain ATCC 9039 / DSM 1715 / NCIMB 8712), this protein is UDP-N-acetylenolpyruvoylglucosamine reductase.